The chain runs to 251 residues: Tail tip protein L (251 aa).

4 residues coordinate [4Fe-4S] cluster: Cys-184, Cys-198, Cys-221, and Cys-228.

This sequence belongs to the lambda-like tail tip protein L family. It depends on [4Fe-4S] cluster as a cofactor.

The protein localises to the virion. It is found in the host cytoplasm. Functionally, part of the distal tail tip complex which plays a role in DNA injection during entry, and in tail assembly initiation during exit. The tail tip complex is assembled successively with three tail central fiber proteins J, one tail tip protein I, one tail tip protein L and one tail tip protein K. The tail tip complex interacts with tail measure protein to initiate tail tube assembly. The formation of the tail tip complex is completed by the addition of tail tip protein M, which is followed by tail tube polymerization. The chain is Tail tip protein L from Escherichia phage N15 (Bacteriophage N15).